The chain runs to 84 residues: Cytochrome b559 subunit alpha (84 aa).

A helical transmembrane segment spans residues 22–36; sequence IIHSITIPSLFVSGW. His24 contacts heme.

This sequence belongs to the PsbE/PsbF family. Heterodimer of an alpha subunit and a beta subunit. PSII is composed of 1 copy each of membrane proteins PsbA, PsbB, PsbC, PsbD, PsbE, PsbF, PsbH, PsbI, PsbJ, PsbK, PsbL, PsbM, PsbT, PsbX, PsbY, PsbZ, Psb30/Ycf12, at least 3 peripheral proteins of the oxygen-evolving complex and a large number of cofactors. It forms dimeric complexes. Heme b serves as cofactor.

The protein resides in the plastid. The protein localises to the chloroplast thylakoid membrane. In terms of biological role, this b-type cytochrome is tightly associated with the reaction center of photosystem II (PSII). PSII is a light-driven water:plastoquinone oxidoreductase that uses light energy to abstract electrons from H(2)O, generating O(2) and a proton gradient subsequently used for ATP formation. It consists of a core antenna complex that captures photons, and an electron transfer chain that converts photonic excitation into a charge separation. This chain is Cytochrome b559 subunit alpha, found in Phaeodactylum tricornutum (strain CCAP 1055/1).